The following is a 340-amino-acid chain: Uroporphyrinogen decarboxylase (340 aa).

Substrate contacts are provided by residues 21–25 (RQAGR), Asp-71, Tyr-147, Ser-202, and His-315.

It belongs to the uroporphyrinogen decarboxylase family. In terms of assembly, homodimer.

Its subcellular location is the cytoplasm. The catalysed reaction is uroporphyrinogen III + 4 H(+) = coproporphyrinogen III + 4 CO2. Its pathway is porphyrin-containing compound metabolism; protoporphyrin-IX biosynthesis; coproporphyrinogen-III from 5-aminolevulinate: step 4/4. Functionally, catalyzes the decarboxylation of four acetate groups of uroporphyrinogen-III to yield coproporphyrinogen-III. This Nautilia profundicola (strain ATCC BAA-1463 / DSM 18972 / AmH) protein is Uroporphyrinogen decarboxylase.